The following is a 169-amino-acid chain: NADH-quinone oxidoreductase subunit B (169 aa).

Cysteine 42, cysteine 43, cysteine 107, and cysteine 136 together coordinate [4Fe-4S] cluster.

The protein belongs to the complex I 20 kDa subunit family. NDH-1 is composed of 14 different subunits. Subunits NuoB, C, D, E, F, and G constitute the peripheral sector of the complex. Requires [4Fe-4S] cluster as cofactor.

It is found in the cell inner membrane. It carries out the reaction a quinone + NADH + 5 H(+)(in) = a quinol + NAD(+) + 4 H(+)(out). Functionally, NDH-1 shuttles electrons from NADH, via FMN and iron-sulfur (Fe-S) centers, to quinones in the respiratory chain. The immediate electron acceptor for the enzyme in this species is believed to be ubiquinone. Couples the redox reaction to proton translocation (for every two electrons transferred, four hydrogen ions are translocated across the cytoplasmic membrane), and thus conserves the redox energy in a proton gradient. This Wolinella succinogenes (strain ATCC 29543 / DSM 1740 / CCUG 13145 / JCM 31913 / LMG 7466 / NCTC 11488 / FDC 602W) (Vibrio succinogenes) protein is NADH-quinone oxidoreductase subunit B.